A 211-amino-acid polypeptide reads, in one-letter code: Endo-1,4-beta-xylanase A (211 aa).

The N-terminal stretch at 1 to 27 (MKVTAAFAGLLVTAFAAPVPEPVLVSR) is a signal peptide. One can recognise a GH11 domain in the interval 28 to 210 (SAGINYVQNY…GAGSASVTIS (183 aa)). The Nucleophile role is filled by glutamate 106. Cysteines 119 and 138 form a disulfide. Glutamate 197 serves as the catalytic Proton donor.

Belongs to the glycosyl hydrolase 11 (cellulase G) family.

It is found in the secreted. It carries out the reaction Endohydrolysis of (1-&gt;4)-beta-D-xylosidic linkages in xylans.. The protein operates within glycan degradation; xylan degradation. In terms of biological role, endo-1,4-beta-xylanase involved in the hydrolysis of xylan, a major structural heterogeneous polysaccharide found in plant biomass representing the second most abundant polysaccharide in the biosphere, after cellulose. This Aspergillus niger protein is Endo-1,4-beta-xylanase A (xynA).